The chain runs to 138 residues: Cell division protein SepF (138 aa).

This sequence belongs to the SepF family. In terms of assembly, homodimer. Interacts with FtsZ.

It is found in the cytoplasm. Functionally, cell division protein that is part of the divisome complex and is recruited early to the Z-ring. Probably stimulates Z-ring formation, perhaps through the cross-linking of FtsZ protofilaments. Its function overlaps with FtsA. This Limosilactobacillus reuteri (strain DSM 20016) (Lactobacillus reuteri) protein is Cell division protein SepF.